Reading from the N-terminus, the 203-residue chain is Holliday junction branch migration complex subunit RuvA (203 aa).

A domain I region spans residues 1 to 64 (MIGRLRGIII…EDAQLLYGFN (64 aa)). Residues 65–142 (NKQERTLFKE…KGLHGDLFTP (78 aa)) are domain II. The flexible linker stretch occupies residues 143–154 (AADLVLTSPASP). The domain III stretch occupies residues 155-203 (ATDDAEQEAVAALVALGYKPQEASRMVSKIARPDASSETLIREALHAAL).

This sequence belongs to the RuvA family. Homotetramer. Forms an RuvA(8)-RuvB(12)-Holliday junction (HJ) complex. HJ DNA is sandwiched between 2 RuvA tetramers; dsDNA enters through RuvA and exits via RuvB. An RuvB hexamer assembles on each DNA strand where it exits the tetramer. Each RuvB hexamer is contacted by two RuvA subunits (via domain III) on 2 adjacent RuvB subunits; this complex drives branch migration. In the full resolvosome a probable DNA-RuvA(4)-RuvB(12)-RuvC(2) complex forms which resolves the HJ.

Its subcellular location is the cytoplasm. Its function is as follows. The RuvA-RuvB-RuvC complex processes Holliday junction (HJ) DNA during genetic recombination and DNA repair, while the RuvA-RuvB complex plays an important role in the rescue of blocked DNA replication forks via replication fork reversal (RFR). RuvA specifically binds to HJ cruciform DNA, conferring on it an open structure. The RuvB hexamer acts as an ATP-dependent pump, pulling dsDNA into and through the RuvAB complex. HJ branch migration allows RuvC to scan DNA until it finds its consensus sequence, where it cleaves and resolves the cruciform DNA. In Escherichia fergusonii (strain ATCC 35469 / DSM 13698 / CCUG 18766 / IAM 14443 / JCM 21226 / LMG 7866 / NBRC 102419 / NCTC 12128 / CDC 0568-73), this protein is Holliday junction branch migration complex subunit RuvA.